Reading from the N-terminus, the 368-residue chain is Isopentenyl-diphosphate delta-isomerase (368 aa).

7 to 8 (RK) lines the substrate pocket. FMN contacts are provided by residues Thr65, 66–68 (GMT), Ser96, and Asn125. 96 to 98 (SQR) contributes to the substrate binding site. Position 160 (Gln160) interacts with substrate. Position 161 (Glu161) interacts with Mg(2+). FMN-binding positions include Lys193, Ser218, Thr223, 275-277 (GIR), and 296-297 (AL).

This sequence belongs to the IPP isomerase type 2 family. In terms of assembly, homooctamer. Dimer of tetramers. FMN serves as cofactor. NADPH is required as a cofactor. The cofactor is Mg(2+).

The protein resides in the cytoplasm. The catalysed reaction is isopentenyl diphosphate = dimethylallyl diphosphate. In terms of biological role, involved in the biosynthesis of isoprenoids. Catalyzes the 1,3-allylic rearrangement of the homoallylic substrate isopentenyl (IPP) to its allylic isomer, dimethylallyl diphosphate (DMAPP). The protein is Isopentenyl-diphosphate delta-isomerase of Saccharolobus shibatae (strain ATCC 51178 / DSM 5389 / JCM 8931 / NBRC 15437 / B12) (Sulfolobus shibatae).